Consider the following 355-residue polypeptide: MKLVDEAEILVTAGNGGNGCVGFRREKFIPLGGPDGGDGGAGGSVWIVADENVNTLVDFRHERTFKAQRGENGMGRQAYGKGGEDRIIVVPVGTVVINVQTDEVIGDLTRHGDRLLVAKGGKGGLGNMHFKSSVNRAPRQATTGEEGEERLLKLELKLLADVGLLGFPNAGKSTLIRAVSSATPKVADYPFTTLYPNLGVVSVEAYRSFVIADVPGLIEGAADGAGLGTQFLRHLQRTRLLLHLVDISPALGVYGEGGVDGVSPADQVRTIERELERHDPELLKKPRWLVLNKADLMFEDEARAAAESIVAELGWTAPWYLVSALGRDGTFPIMKDVMAFFDRQREDELDARNAG.

Residues 1 to 159 (MKLVDEAEIL…RLLKLELKLL (159 aa)) form the Obg domain. In terms of domain architecture, OBG-type G spans 160–342 (ADVGLLGFPN…IMKDVMAFFD (183 aa)). GTP contacts are provided by residues 166–173 (GFPNAGKS), 191–195 (FTTLY), 213–216 (DVPG), 292–295 (NKAD), and 323–325 (SAL). Positions 173 and 193 each coordinate Mg(2+).

This sequence belongs to the TRAFAC class OBG-HflX-like GTPase superfamily. OBG GTPase family. As to quaternary structure, monomer. It depends on Mg(2+) as a cofactor.

Its subcellular location is the cytoplasm. Its function is as follows. An essential GTPase which binds GTP, GDP and possibly (p)ppGpp with moderate affinity, with high nucleotide exchange rates and a fairly low GTP hydrolysis rate. Plays a role in control of the cell cycle, stress response, ribosome biogenesis and in those bacteria that undergo differentiation, in morphogenesis control. This is GTPase Obg from Xanthomonas euvesicatoria pv. vesicatoria (strain 85-10) (Xanthomonas campestris pv. vesicatoria).